The following is a 360-amino-acid chain: Protein phosphatase 1 regulatory subunit 7 (360 aa).

Residues 1-64 (MAAERGAGQQ…GEEDPEEEHE (64 aa)) form a disordered region. Alanine 2 is subject to N-acetylalanine. Residues serine 12, serine 24, serine 27, serine 44, and serine 47 each carry the phosphoserine modification. The span at 17-34 (EVDRRVESEESGDEEGKK) shows a compositional bias: basic and acidic residues. Over residues 53–63 (ERGEEDPEEEH) the composition is skewed to acidic residues. 11 LRR repeats span residues 77-98 (DAED…EVLK), 99-120 (KVKT…EELQ), 121-142 (SLRE…EALT), 143-164 (ELEI…DKVT), 165-186 (QLKK…SNLH), 187-208 (QLQM…DTLT), 209-230 (NLES…DALT), 231-252 (NLTV…QNLV), 253-274 (NLQE…ENNN), 275-296 (KLTM…SHLT), and 297-318 (EPQE…DELK). Position 322 is a phosphoserine (serine 322). The LRRCT domain maps to 331-360 (NPLQKDPQYRRKVMLALPSVRQIDATFVRF).

The protein belongs to the SDS22 family. In terms of assembly, interacts with PPP1CA, PPP1CB and PPP1CC/PPP1G.

It is found in the nucleus. In terms of biological role, regulatory subunit of protein phosphatase 1. The chain is Protein phosphatase 1 regulatory subunit 7 (PPP1R7) from Pongo abelii (Sumatran orangutan).